We begin with the raw amino-acid sequence, 194 residues long: 21 kDa hemolysin (194 aa).

An N-terminal signal peptide occupies residues 1–19; it reads MRTRSRSTVRPLWPPPSPA. BON domains lie at 49-118 and 127-194; these read DDEV…RTGE and IDSW…NYVQ.

It localises to the periplasm. This is 21 kDa hemolysin (hly) from Actinobacillus pleuropneumoniae (Haemophilus pleuropneumoniae).